The following is a 217-amino-acid chain: Very-long-chain (3R)-3-hydroxyacyl-CoA dehydratase PHS1 (217 aa).

Residues 1-11 lie on the Cytoplasmic side of the membrane; that stretch reads MSKKLASPLSF. Residues 12-29 form a helical membrane-spanning segment; sequence LPLYNLLSAVGWSYLLYL. At 30–47 the chain is on the lumenal side; sequence VISLYPKVGQPAFFYQTK. The helical transmembrane segment at 48–66 threads the bilayer; sequence NVATLVQCGAIIEIINSFL. Topologically, residues 67–76 are cytoplasmic; the sequence is GVVRSPLLTT. Residues 77 to 94 form a helical membrane-spanning segment; the sequence is VAQVSSRLLVVLGIFQLL. Over 95 to 99 the chain is Lumenal; it reads PNTSG. A helical membrane pass occupies residues 100–117; that stretch reads VQSVVYISLLLAWSITEI. The Cytoplasmic segment spans residues 118–142; sequence VRYLYYFFMLVFKNGAPKILILLRY. The helical transmembrane segment at 143-160 threads the bilayer; sequence NLFWILYPTGVASELRII. Residues Tyr149 and Glu156 contribute to the active site. Residues 161-178 are Lumenal-facing; sequence YCALNAAESQYSLLYKRI. The helical transmembrane segment at 179–196 threads the bilayer; the sequence is LIAAMLAYIPGFPMLFLH. At 197–217 the chain is on the cytoplasmic side; it reads MVAQRKKVMKSLRSSFGKKLI. The Endoplasmic reticulum retention signal motif lies at 214-217; the sequence is KKLI.

This sequence belongs to the very long-chain fatty acids dehydratase HACD family.

The protein resides in the endoplasmic reticulum membrane. It is found in the vacuole membrane. It carries out the reaction a very-long-chain (3R)-3-hydroxyacyl-CoA = a very-long-chain (2E)-enoyl-CoA + H2O. It catalyses the reaction (3R)-hydroxyeicosanoyl-CoA = (2E)-eicosenoyl-CoA + H2O. The catalysed reaction is (3R)-hydroxydocosanoyl-CoA = (2E)-docosenoyl-CoA + H2O. The enzyme catalyses (3R)-hydroxyoctadecanoyl-CoA = (2E)-octadecenoyl-CoA + H2O. It carries out the reaction (3R)-hydroxytetracosanoyl-CoA = (2E)-tetracosenoyl-CoA + H2O. It catalyses the reaction (3R)-hydroxyhexacosanoyl-CoA = (2E)-hexacosenoyl-CoA + H2O. The catalysed reaction is (3R)-hydroxyhexadecanoyl-CoA = (2E)-hexadecenoyl-CoA + H2O. The protein operates within lipid metabolism; fatty acid biosynthesis. Functionally, catalyzes the third of the four reactions of the long-chain fatty acids elongation cycle. This endoplasmic reticulum-bound enzymatic process, allows the addition of two carbons to the chain of long- and very long-chain fatty acids/VLCFAs per cycle. This enzyme catalyzes the dehydration of the 3-hydroxyacyl-CoA intermediate into trans-2,3-enoyl-CoA, within each cycle of fatty acid elongation. Thereby, it participates in the production of VLCFAs of different chain lengths that are involved in multiple biological processes as precursors of membrane lipids and lipid mediators. The chain is Very-long-chain (3R)-3-hydroxyacyl-CoA dehydratase PHS1 (PHS1) from Saccharomyces cerevisiae (strain ATCC 204508 / S288c) (Baker's yeast).